The primary structure comprises 189 residues: UPF0251 protein MTH_1178 (189 aa).

Belongs to the UPF0251 family.

The protein is UPF0251 protein MTH_1178 of Methanothermobacter thermautotrophicus (strain ATCC 29096 / DSM 1053 / JCM 10044 / NBRC 100330 / Delta H) (Methanobacterium thermoautotrophicum).